The following is a 243-amino-acid chain: Probable phosphatase CLD_1129 (243 aa).

Positions 8, 10, 16, 41, 74, 102, 132, 192, and 194 each coordinate Zn(2+).

Belongs to the PHP family. Zn(2+) serves as cofactor.

This chain is Probable phosphatase CLD_1129, found in Clostridium botulinum (strain Okra / Type B1).